The following is an 85-amino-acid chain: Cytochrome c6 (85 aa).

Heme c-binding residues include Cys-14, Cys-17, His-18, and Met-58.

This sequence belongs to the cytochrome c family. PetJ subfamily. Monomer. Post-translationally, binds 1 heme c group covalently per subunit.

It localises to the cellular thylakoid lumen. Functionally, functions as an electron carrier between membrane-bound cytochrome b6-f and photosystem I in oxygenic photosynthesis. The chain is Cytochrome c6 (petJ) from Leptolyngbya boryana (Plectonema boryanum).